The sequence spans 461 residues: Phytase A (461 aa).

Cys-22 and Cys-31 are disulfide-bonded. Positions 41, 42, 71, 72, 75, and 78 each coordinate 1D-myo-inositol hexakisphosphate. 4 cysteine pairs are disulfide-bonded: Cys-61–Cys-405, Cys-205–Cys-456, Cys-254–Cys-272, and Cys-427–Cys-435. His-72 functions as the Nucleophile in the catalytic mechanism. 2 N-linked (GlcNAc...) asparagine glycosylation sites follow: Asn-95 and Asn-110. Arg-155 contributes to the 1D-myo-inositol hexakisphosphate binding site. Residue Asn-197 is glycosylated (N-linked (GlcNAc...) asparagine). Lys-291 contacts 1D-myo-inositol hexakisphosphate. Asn-329 and Asn-343 each carry an N-linked (GlcNAc...) asparagine glycan. 1D-myo-inositol hexakisphosphate is bound by residues His-352 and Asp-353. Residue Asn-367 is glycosylated (N-linked (GlcNAc...) asparagine).

It belongs to the histidine acid phosphatase family. As to quaternary structure, monomer. Post-translationally, glycosylated.

It localises to the secreted. It catalyses the reaction 1D-myo-inositol hexakisphosphate + H2O = 1D-myo-inositol 1,2,4,5,6-pentakisphosphate + phosphate. It carries out the reaction 1D-myo-inositol 1,2,4,5,6-pentakisphosphate + H2O = 1D-myo-inositol 1,2,5,6-tetrakisphosphate + phosphate. The catalysed reaction is 1D-myo-inositol 1,2,5,6-tetrakisphosphate + H2O = 1D-myo-inositol 1,2,6-trisphosphate + phosphate. The enzyme catalyses 1D-myo-inositol 1,2,6-trisphosphate + H2O = 1D-myo-inositol 1,2-bisphosphate + phosphate. It catalyses the reaction 1D-myo-inositol 1,2-bisphosphate + H2O = 1D-myo-inositol 2-phosphate + phosphate. Its function is as follows. Catalyzes the phosphate monoester hydrolysis of phytic acid (myo-inositol hexakisphosphate), which results in the stepwise formation of myo-inositol pentakis-, tetrakis-, tris-, bis-, and monophosphates, as well as the liberation of inorganic phosphate. Myo-inositol 2-monophosphate is the end product. This chain is Phytase A, found in Penicillium oxalicum.